The chain runs to 160 residues: V-type proton ATPase subunit c (160 aa).

Residues 1-6 are Lumenal-facing; sequence MSDLCP. Residues 7–27 traverse the membrane as a helical segment; the sequence is VYAPFFGSIGCAAAIVFTCFG. At 28–53 the chain is on the cytoplasmic side; it reads ASYGTAKSGVGICATSVTRPDLLVKN. The chain crosses the membrane as a helical span at residues 54–74; it reads VVPVVMAGIIAIYGLVVSVLV. Over 75–90 the chain is Lumenal; that stretch reads SDSLSQKQALYTGFIQ. The chain crosses the membrane as a helical span at residues 91–111; sequence LGAGLSVGLSGLAAGFAIGIV. Topologically, residues 112-129 are cytoplasmic; the sequence is GDAGVRGTAQQPRLFVGM. The chain crosses the membrane as a helical span at residues 130–150; sequence ILILIFAEVLGLYGLIVALLL. Topologically, residues 151–160 are lumenal; the sequence is NSRASQDVTC.

It belongs to the V-ATPase proteolipid subunit family. As to quaternary structure, V-ATPase is a heteromultimeric enzyme composed of a peripheral catalytic V1 complex (components A to H) attached to an integral membrane V0 proton pore complex (components: a, c, c', c'', d, e, f and VOA1). The decameric c-ring forms the proton-conducting pore, and is composed of eight proteolipid subunits c, one subunit c' and one subunit c''.

It localises to the vacuole membrane. Proton-conducting pore forming subunit of the V0 complex of vacuolar(H+)-ATPase (V-ATPase), a multisubunit enzyme composed of a peripheral complex (V1) that hydrolyzes ATP and a membrane integral complex (V0) that translocates protons. V-ATPase is responsible for acidifying and maintaining the pH of intracellular compartments. The sequence is that of V-type proton ATPase subunit c (VMA3) from Candida tropicalis (Yeast).